A 258-amino-acid polypeptide reads, in one-letter code: UPF0328 protein ECU02_0090 (258 aa).

It belongs to the UPF0328 family.

The sequence is that of UPF0328 protein ECU02_0090 from Encephalitozoon cuniculi (strain GB-M1) (Microsporidian parasite).